Reading from the N-terminus, the 134-residue chain is Small ribosomal subunit protein uS9 (134 aa).

The segment at 113–134 is disordered; sequence REVERKKYGLKKARRAPQFSKR. Residues 120-134 show a composition bias toward basic residues; the sequence is YGLKKARRAPQFSKR.

Belongs to the universal ribosomal protein uS9 family.

The protein is Small ribosomal subunit protein uS9 (rpsI) of Thermotoga maritima (strain ATCC 43589 / DSM 3109 / JCM 10099 / NBRC 100826 / MSB8).